Reading from the N-terminus, the 193-residue chain is Orotate phosphoribosyltransferase (193 aa).

Residues Arg107, Lys108, Lys111, His113, and Glu133–Ser141 contribute to the 5-phospho-alpha-D-ribose 1-diphosphate site. Orotate-binding residues include Thr137 and Arg165.

It belongs to the purine/pyrimidine phosphoribosyltransferase family. PyrE subfamily. As to quaternary structure, homodimer. It depends on Mg(2+) as a cofactor.

It catalyses the reaction orotidine 5'-phosphate + diphosphate = orotate + 5-phospho-alpha-D-ribose 1-diphosphate. The protein operates within pyrimidine metabolism; UMP biosynthesis via de novo pathway; UMP from orotate: step 1/2. Catalyzes the transfer of a ribosyl phosphate group from 5-phosphoribose 1-diphosphate to orotate, leading to the formation of orotidine monophosphate (OMP). The chain is Orotate phosphoribosyltransferase from Rhodopirellula baltica (strain DSM 10527 / NCIMB 13988 / SH1).